Consider the following 236-residue polypeptide: 2,3,4,5-tetrahydropyridine-2,6-dicarboxylate N-acetyltransferase (236 aa).

It belongs to the transferase hexapeptide repeat family. DapH subfamily.

The enzyme catalyses (S)-2,3,4,5-tetrahydrodipicolinate + acetyl-CoA + H2O = L-2-acetamido-6-oxoheptanedioate + CoA. The protein operates within amino-acid biosynthesis; L-lysine biosynthesis via DAP pathway; LL-2,6-diaminopimelate from (S)-tetrahydrodipicolinate (acetylase route): step 1/3. Catalyzes the transfer of an acetyl group from acetyl-CoA to tetrahydrodipicolinate. This chain is 2,3,4,5-tetrahydropyridine-2,6-dicarboxylate N-acetyltransferase, found in Bacillus licheniformis (strain ATCC 14580 / DSM 13 / JCM 2505 / CCUG 7422 / NBRC 12200 / NCIMB 9375 / NCTC 10341 / NRRL NRS-1264 / Gibson 46).